Consider the following 182-residue polypeptide: Organic solute transporter subunit beta (182 aa).

Residues 1 to 20 (MSGLLKYLFGCFILCLLLQG) form the signal peptide. At 21–64 (KTHMTSATISKPHETIDIEKQNMTGERNSTLAQQLSFPMEDPTN) the chain is on the extracellular side. Asn42 and Asn48 each carry an N-linked (GlcNAc...) asparagine glycan. Residues 65-85 (WNYAILALAFVVLFLAFLILA) traverse the membrane as a helical segment. Residues 86 to 182 (QNSRANRTRK…LYTDSKEDDV (97 aa)) are Cytoplasmic-facing.

The protein belongs to the OST-beta family. As to quaternary structure, interacts with slc51a. The Ost-alpha/Ost-beta complex is a heterodimer composed of alpha (slc51a) and beta (slc51b) subunit; may induce the transport of slc51a from the endoplasmic reticulum to the plasma membrane. Expressed in liver.

The protein resides in the cell membrane. In terms of biological role, essential component of the Ost-alpha/Ost-beta complex, a heterodimer that acts as the intestinal basolateral transporter responsible for bile acid export from enterocytes into portal blood. Efficiently transports the major species of bile acids. May modulate slc51a glycosylation, membrane trafficking and stability activities. Able to transport taurocholate, estrone sulfate, digoxin, and prostaglandin E(2), but not p-aminohippurate or S-dinitrophenyl glutathione. This Leucoraja erinaceus (Little skate) protein is Organic solute transporter subunit beta (slc51b).